The sequence spans 147 residues: Transcription antitermination protein NusB (147 aa).

It belongs to the NusB family.

Its function is as follows. Involved in transcription antitermination. Required for transcription of ribosomal RNA (rRNA) genes. Binds specifically to the boxA antiterminator sequence of the ribosomal RNA (rrn) operons. This Legionella pneumophila (strain Paris) protein is Transcription antitermination protein NusB.